A 563-amino-acid polypeptide reads, in one-letter code: MFNCDEDLKAYEDELYHEETSSDESIDSELEFHLYSQVHYSQNLSESKPEEDTGGDSVTYVPGAKQQNNACTEKDDKLVDIIILSDSDAKVSDTCPVIILSDTTEEDSVYSSKIKKKYSSTYVQGESLCGPCSHSTPKVSAPQSNNFKSQKSCQNSSSKNYSGGYVQEVLVIRGSSEDEEANKSENDIIISESDMSDVENWMLLGRAKEDGDASIQLNLEGYKILSDDEGERGAAWSISEKDVEAQIGNYTPLRRSNRYYTDKNVVCRNCDKRGHLSKNCPVPKKLPACCLCGERGHYQNSCPSRYCLNCFLPGHFFKECIERAYWRKTCHRCSMPGHYADACPEIWRQYHLTIKAGPIKKPKSHSGQKDIVYCCNCAKKGHCIYECKERRMNSDKLPTCQLVFSYDHEYDIRKRNERTKSKIKDFQKAGLLTCEMREFSESKVDAKPPAKKRKKKHPSKKERKGTIRDYECAETKQKKKHKKRKSGLQEIEGDFPRGIPNSYVELKKPSKKYDGSFLHLDKTKDMFKNRQKKTRRGKRCSSAVDQDLLIIKQKKKKSKRKVA.

Disordered regions lie at residues 41-64 and 133-157; these read SQNLSESKPEEDTGGDSVTYVPGA and SHSTPKVSAPQSNNFKSQKSCQNSS. Over residues 133–142 the composition is skewed to polar residues; the sequence is SHSTPKVSAP. Low complexity predominate over residues 143–157; the sequence is QSNNFKSQKSCQNSS. 5 CCHC-type zinc fingers span residues 265-282, 287-304, 305-322, 328-345, and 372-389; these read VVCRNCDKRGHLSKNCPV, PACCLCGERGHYQNSCPS, RYCLNCFLPGHFFKECIE, KTCHRCSMPGHYADACPE, and VYCCNCAKKGHCIYECKE. The interval 443-494 is disordered; that stretch reads KVDAKPPAKKRKKKHPSKKERKGTIRDYECAETKQKKKHKKRKSGLQEIEGD. Basic residues predominate over residues 449–463; sequence PAKKRKKKHPSKKER. Residues 464-476 show a composition bias toward basic and acidic residues; that stretch reads KGTIRDYECAETK. Basic residues predominate over residues 477-486; sequence QKKKHKKRKS.

Component of a nucleolar TRAMP-like complex, an ATP-dependent exosome regulatory complex consisting of a helicase (MTREX), an oligadenylate polymerase (PAPD5 or PAPD7), and a substrate specific RNA-binding factor (ZCCHC7 or ZCCHC8). Several TRAMP-like complexes exist with specific compositions and are associated with nuclear, or nucleolar RNA exosomes.

Its subcellular location is the nucleus. It localises to the nucleolus. The protein is Zinc finger CCHC domain-containing protein 7 (zcchc7) of Xenopus laevis (African clawed frog).